Consider the following 101-residue polypeptide: Small ribosomal subunit protein uS14 (101 aa).

This sequence belongs to the universal ribosomal protein uS14 family. In terms of assembly, part of the 30S ribosomal subunit. Contacts proteins S3 and S10.

Its function is as follows. Binds 16S rRNA, required for the assembly of 30S particles and may also be responsible for determining the conformation of the 16S rRNA at the A site. This chain is Small ribosomal subunit protein uS14, found in Janthinobacterium sp. (strain Marseille) (Minibacterium massiliensis).